The chain runs to 296 residues: Porphobilinogen deaminase (296 aa).

Cys232 is modified (S-(dipyrrolylmethanemethyl)cysteine).

It belongs to the HMBS family. In terms of assembly, monomer. It depends on dipyrromethane as a cofactor.

The enzyme catalyses 4 porphobilinogen + H2O = hydroxymethylbilane + 4 NH4(+). It participates in porphyrin-containing compound metabolism; protoporphyrin-IX biosynthesis; coproporphyrinogen-III from 5-aminolevulinate: step 2/4. Its function is as follows. Tetrapolymerization of the monopyrrole PBG into the hydroxymethylbilane pre-uroporphyrinogen in several discrete steps. The sequence is that of Porphobilinogen deaminase from Corynebacterium aurimucosum (strain ATCC 700975 / DSM 44827 / CIP 107346 / CN-1) (Corynebacterium nigricans).